A 180-amino-acid polypeptide reads, in one-letter code: Endoribonuclease YbeY (180 aa).

Zn(2+)-binding residues include His-149, His-153, and His-159.

It belongs to the endoribonuclease YbeY family. The cofactor is Zn(2+).

It is found in the cytoplasm. Functionally, single strand-specific metallo-endoribonuclease involved in late-stage 70S ribosome quality control and in maturation of the 3' terminus of the 16S rRNA. The polypeptide is Endoribonuclease YbeY (Prochlorococcus marinus (strain MIT 9515)).